The sequence spans 452 residues: Probable diguanylate cyclase DgcT (452 aa).

Residues 1-7 (MEKDYLR) are Cytoplasmic-facing. Residues 8–28 (ISSTVLVSLLFGLALVLVNSW) form a helical membrane-spanning segment. The Periplasmic portion of the chain corresponds to 29 to 45 (FNQPGVEEVVPRSTYLM). Residues 46-66 (VMIALFFIDTVAFIFMQLYFI) traverse the membrane as a helical segment. At 67-74 (YDRRQFSN) the chain is on the cytoplasmic side. Residues 75–95 (CVLSLAFLSCLIYFVITVIII) traverse the membrane as a helical segment. The Periplasmic portion of the chain corresponds to 96 to 111 (QQIIEERLTSSVVQND). A helical transmembrane segment spans residues 112-132 (IAIYYLFRQMSLCILIFLALV). Topologically, residues 133–148 (NKVSENTKQRNLFSKK) are cytoplasmic. A helical membrane pass occupies residues 149 to 169 (MTLCISLFFVFGGPIVAHILS). Over 170–195 (SHYESYNLHIAELTNENGQVVWKASY) the chain is Periplasmic. Residues 196-216 (VTIMIFMWLTLLSVNLYFNGL) traverse the membrane as a helical segment. The Cytoplasmic portion of the chain corresponds to 217–219 (RYD). A helical transmembrane segment spans residues 220–240 (IWNGVTVIAFCAVLYNISLLF). Residues 241–254 (MSRYSVSTWYISRT) are Periplasmic-facing. The helical transmembrane segment at 255 to 275 (IEVVSKLTVMVIFMCHIFSAL) threads the bilayer. At 276–452 (RVTKNIAHRD…RDVVNFCESP (177 aa)) the chain is on the cytoplasmic side. The GGDEF domain maps to 310-445 (TPYCVMIMDI…GRNKVVVRDV (136 aa)). Mg(2+)-binding residues include D318 and I319. Substrate-binding residues include N326, H331, and D335. Position 361 (E361) interacts with Mg(2+). E361 functions as the Proton acceptor in the catalytic mechanism. A substrate-binding site is contributed by R381.

Homodimer. It depends on Mg(2+) as a cofactor.

The protein resides in the cell inner membrane. It carries out the reaction 2 GTP = 3',3'-c-di-GMP + 2 diphosphate. It functions in the pathway purine metabolism; 3',5'-cyclic di-GMP biosynthesis. Functionally, probably catalyzes the synthesis of cyclic-di-GMP (c-di-GMP) via the condensation of 2 GTP molecules. Overexpression leads to a strong repression of swimming; swimming returns to normal when residues 359-360 are both mutated to Ala. Overexpression also leads to a 20-fold increase in c-di-GMP levels in vivo. Cyclic-di-GMP is a second messenger which controls cell surface-associated traits in bacteria. This chain is Probable diguanylate cyclase DgcT, found in Escherichia coli (strain K12).